The following is a 101-amino-acid chain: Large ribosomal subunit protein uL23 (101 aa).

The protein belongs to the universal ribosomal protein uL23 family. In terms of assembly, part of the 50S ribosomal subunit. Contacts protein L29, and trigger factor when it is bound to the ribosome.

Its function is as follows. One of the early assembly proteins it binds 23S rRNA. One of the proteins that surrounds the polypeptide exit tunnel on the outside of the ribosome. Forms the main docking site for trigger factor binding to the ribosome. The polypeptide is Large ribosomal subunit protein uL23 (Histophilus somni (strain 129Pt) (Haemophilus somnus)).